Reading from the N-terminus, the 616-residue chain is MRLAIKRRASRGQRPGPDEKRARDMEKARPQWGNPLQFVFACISYAVGLGNVWRFPYLCQMYGGGSFLVPYLIMLIVEGMPLLYLELAVGQRMRQGSIGAWRTISPYLSGVGVASVVVSFFLSMYYNVINAWGFWYLFHSFQDPLPWSVCPLNSNRTGYDEECEKASSTQYFWYRKTLNISPSIQENGGVQWEPALCLTLAWLMVYLCILRGTESTGKVVYFTALMPYCVLIIYLVRGLTLHGATNGLMYMFTPKIEQLANPKAWINAATQIFFSLGLGFGSLIAFASYNEPSNDCQKHAVIVSVINSSTSIFASIVTFSIYGFKATFNYENCLNKVILLLTNSFDLEDGFLTASNLEEVKDYLASTYPNKYSEVFPHIRNCSLESELNTAVQGTGLAFIVYAEAIKNMEVSQLWSVLYFFMLLMLGMGSMLGNTAAILTPLTDSKVISSYLPKEAISGLVCLINCAVGMVFTMEAGNYWFDIFNDYAATLSLLLIVLVETIAVCYVYGLRRFESDLRAMTGRPLNWYWKAMWAFVSPLLIIGLFIFYLSDYILTGTLQYQAWDATQGQLVTKDYPPHALAVIGLLVASSTMCIPLVALGTFIRNRLKRGGSSPVA.

Positions 1–11 (MRLAIKRRASR) are enriched in basic residues. Positions 1 to 26 (MRLAIKRRASRGQRPGPDEKRARDME) are disordered. Residues 1-37 (MRLAIKRRASRGQRPGPDEKRARDMEKARPQWGNPLQ) are Cytoplasmic-facing. A compositionally biased stretch (basic and acidic residues) spans 16-26 (GPDEKRARDME). The helical transmembrane segment at 38-58 (FVFACISYAVGLGNVWRFPYL) threads the bilayer. The Extracellular portion of the chain corresponds to 59–66 (CQMYGGGS). Residues 67-87 (FLVPYLIMLIVEGMPLLYLEL) form a helical membrane-spanning segment. Residues 88–103 (AVGQRMRQGSIGAWRT) lie on the Cytoplasmic side of the membrane. Residues 104 to 124 (ISPYLSGVGVASVVVSFFLSM) form a helical membrane-spanning segment. Over 125–189 (YYNVINAWGF…ISPSIQENGG (65 aa)) the chain is Extracellular. An N-linked (GlcNAc...) asparagine glycan is attached at N155. Residues 190 to 210 (VQWEPALCLTLAWLMVYLCIL) traverse the membrane as a helical segment. Over 211–218 (RGTESTGK) the chain is Cytoplasmic. A helical transmembrane segment spans residues 219-239 (VVYFTALMPYCVLIIYLVRGL). Residues 240–265 (TLHGATNGLMYMFTPKIEQLANPKAW) are Extracellular-facing. A helical membrane pass occupies residues 266–286 (INAATQIFFSLGLGFGSLIAF). Over 287–300 (ASYNEPSNDCQKHA) the chain is Cytoplasmic. A helical transmembrane segment spans residues 301–321 (VIVSVINSSTSIFASIVTFSI). Residues 322-413 (YGFKATFNYE…EAIKNMEVSQ (92 aa)) are Extracellular-facing. A glycan (N-linked (GlcNAc...) asparagine) is linked at N381. The helical transmembrane segment at 414-434 (LWSVLYFFMLLMLGMGSMLGN) threads the bilayer. Over 435–455 (TAAILTPLTDSKVISSYLPKE) the chain is Cytoplasmic. A helical transmembrane segment spans residues 456–476 (AISGLVCLINCAVGMVFTMEA). Residues 477 to 489 (GNYWFDIFNDYAA) are Extracellular-facing. A helical membrane pass occupies residues 490-510 (TLSLLLIVLVETIAVCYVYGL). At 511 to 533 (RRFESDLRAMTGRPLNWYWKAMW) the chain is on the cytoplasmic side. The helical transmembrane segment at 534–554 (AFVSPLLIIGLFIFYLSDYIL) threads the bilayer. Residues 555–578 (TGTLQYQAWDATQGQLVTKDYPPH) lie on the Extracellular side of the membrane. The helical transmembrane segment at 579-599 (ALAVIGLLVASSTMCIPLVAL) threads the bilayer. Residues 600-616 (GTFIRNRLKRGGSSPVA) are Cytoplasmic-facing.

This sequence belongs to the sodium:neurotransmitter symporter (SNF) (TC 2.A.22) family. SLC6A20 subfamily. As to expression, highly expressed in epithelial cells of duodenum, jejunum, ileum, stomach, cecum, colon and kidney proximal tubule. Also expressed in the choroid plexus, microglia and meniges of the brain and in the ovary.

Its subcellular location is the apical cell membrane. It catalyses the reaction L-proline(out) + chloride(out) + 2 Na(+)(out) = L-proline(in) + chloride(in) + 2 Na(+)(in). It carries out the reaction 4-hydroxy-L-proline(out) + chloride(out) + 2 Na(+)(out) = 4-hydroxy-L-proline(in) + chloride(in) + 2 Na(+)(in). The catalysed reaction is 2-methyl-2-(methylamino)propanoate(out) + chloride(out) + 2 Na(+)(out) = 2-methyl-2-(methylamino)propanoate(in) + chloride(in) + 2 Na(+)(in). The enzyme catalyses L-pipecolate(out) + chloride(out) + 2 Na(+)(out) = L-pipecolate(in) + chloride(in) + 2 Na(+)(in). It catalyses the reaction glycine betaine(out) + chloride(out) + 2 Na(+)(out) = glycine betaine(in) + chloride(in) + 2 Na(+)(in). It carries out the reaction glycine(out) + chloride(out) + 2 Na(+)(out) = glycine(in) + chloride(in) + 2 Na(+)(in). Functionally, mediates the Na(+)- and Cl(-)-dependent uptake of imino acids such as L-proline, N-methyl-L-proline and pipecolate as well as N-methylated amino acids. Also transports glycine, regulates proline and glycine homeostasis in the brain playing a role in the modulation of NMDAR currents. The polypeptide is Sodium- and chloride-dependent transporter XTRP3 (Rattus norvegicus (Rat)).